A 578-amino-acid polypeptide reads, in one-letter code: L-2,3-diaminopropanoate--citrate ligase (578 aa).

The protein belongs to the IucA/IucC family. In terms of assembly, forms a mixture of monomer and dimer in solution.

The catalysed reaction is (S)-2,3-diaminopropanoate + citrate + ATP = 2-[(L-alanin-3-ylcarbamoyl)methyl]-2-hydroxybutanedioate + AMP + diphosphate. It participates in siderophore biosynthesis. In terms of biological role, catalyzes the synthesis of citryl-L-2,3-diaminopropionic acid from L-2,3-diaminopropionic acid (L-Dap) and citrate, the first step in staphyloferrin B biosynthesis. The sequence is that of L-2,3-diaminopropanoate--citrate ligase from Staphylococcus aureus (strain NCTC 8325 / PS 47).